A 337-amino-acid polypeptide reads, in one-letter code: Na(+)/H(+) exchange regulatory cofactor NHE-RF2 (337 aa).

A PDZ 1 domain is found at 11–91; the sequence is LCRLVRGEQG…QTQLLVVDKE (81 aa). The tract at residues 112–145 is disordered; it reads LPPAHNPWEPKPDWACSGSLGSDTGQKDVNGPPR. Phosphoserine is present on residues serine 130, serine 183, serine 186, serine 254, serine 269, serine 280, and serine 303. Residues 151-231 enclose the PDZ 2 domain; sequence LCHLRRGPQG…EARLLVVDPE (81 aa). The disordered stretch occupies residues 242–337; it reads VPTEEHVEGP…NRKREIFSNF (96 aa). The span at 255-275 shows a compositional bias: polar residues; that stretch reads PVTNGTSPAQLNGGSVCSSRS. The segment covering 327–337 has biased composition (basic and acidic residues); it reads WNRKREIFSNF.

Homodimer, and heterodimer with NHERF1. Binds PDZK1. Interacts with SRY. Binds ADRB2, SLC9A3, P2RY1, P2YR2, RDX and LPAR2. Interacts with MCC. Found in a complex with EZR, PODXL and NHERF2. Interacts (via the PDZ domains) with PODXL (via the C-terminal PDZ-binding motif DTHL); interaction is detected in glomerular epithelium cells. Interacts with SGK1 and KCNJ1/ROMK1. Interacts (via the PDZ domains) with SLC26A6.

It localises to the endomembrane system. It is found in the nucleus. The protein localises to the apical cell membrane. Scaffold protein that connects plasma membrane proteins with members of the ezrin/moesin/radixin family and thereby helps to link them to the actin cytoskeleton and to regulate their surface expression. Necessary for cAMP-mediated phosphorylation and inhibition of SLC9A3. May also act as scaffold protein in the nucleus. The protein is Na(+)/H(+) exchange regulatory cofactor NHE-RF2 (Nherf2) of Mus musculus (Mouse).